We begin with the raw amino-acid sequence, 212 residues long: Orotate phosphoribosyltransferase (212 aa).

Residue Lys26 participates in 5-phospho-alpha-D-ribose 1-diphosphate binding. 34–35 (FF) provides a ligand contact to orotate. 5-phospho-alpha-D-ribose 1-diphosphate contacts are provided by residues 72–73 (YK), Arg99, Lys100, Lys103, His105, and 124–132 (DDVITVGTA). The orotate site is built by Thr128 and Arg156.

It belongs to the purine/pyrimidine phosphoribosyltransferase family. PyrE subfamily. As to quaternary structure, homodimer. The cofactor is Mg(2+).

It catalyses the reaction orotidine 5'-phosphate + diphosphate = orotate + 5-phospho-alpha-D-ribose 1-diphosphate. The protein operates within pyrimidine metabolism; UMP biosynthesis via de novo pathway; UMP from orotate: step 1/2. Functionally, catalyzes the transfer of a ribosyl phosphate group from 5-phosphoribose 1-diphosphate to orotate, leading to the formation of orotidine monophosphate (OMP). The protein is Orotate phosphoribosyltransferase of Ruthia magnifica subsp. Calyptogena magnifica.